A 296-amino-acid polypeptide reads, in one-letter code: Glutamate 5-kinase (296 aa).

Residue lysine 15 participates in ATP binding. Residues serine 55, aspartate 159, and asparagine 186 each coordinate substrate. Residues 206 to 207 (SD) and 248 to 254 (TGGIATK) each bind ATP.

This sequence belongs to the glutamate 5-kinase family.

Its subcellular location is the cytoplasm. The catalysed reaction is L-glutamate + ATP = L-glutamyl 5-phosphate + ADP. It functions in the pathway amino-acid biosynthesis; L-proline biosynthesis; L-glutamate 5-semialdehyde from L-glutamate: step 1/2. Functionally, catalyzes the transfer of a phosphate group to glutamate to form L-glutamate 5-phosphate. This Treponema pallidum (strain Nichols) protein is Glutamate 5-kinase.